Consider the following 563-residue polypeptide: CTP synthase (563 aa).

The tract at residues 1 to 280 is amidoligase domain; the sequence is MTKFVFVTGG…DEMICMKLQL (280 aa). Ser-13 lines the CTP pocket. Ser-13 is a UTP binding site. Residues 14–19 and Asp-71 each bind ATP; that span reads SLGKGI. Residues Asp-71 and Glu-154 each contribute to the Mg(2+) site. Residues 161-163, 201-206, and Lys-237 each bind CTP; these read DIE and KTKPTQ. UTP-binding positions include 201–206 and Lys-237; that span reads KTKPTQ. The Glutamine amidotransferase type-1 domain maps to 305-557; sequence TIAMAGKYTE…IAAALEHHAA (253 aa). Residue Gly-366 coordinates L-glutamine. Cys-393 functions as the Nucleophile; for glutamine hydrolysis in the catalytic mechanism. Residues 394 to 397, Glu-417, and Arg-483 contribute to the L-glutamine site; that span reads LGMQ. Residues His-530 and Glu-532 contribute to the active site.

The protein belongs to the CTP synthase family. In terms of assembly, homotetramer.

It carries out the reaction UTP + L-glutamine + ATP + H2O = CTP + L-glutamate + ADP + phosphate + 2 H(+). The enzyme catalyses L-glutamine + H2O = L-glutamate + NH4(+). The catalysed reaction is UTP + NH4(+) + ATP = CTP + ADP + phosphate + 2 H(+). It participates in pyrimidine metabolism; CTP biosynthesis via de novo pathway; CTP from UDP: step 2/2. Allosterically activated by GTP, when glutamine is the substrate; GTP has no effect on the reaction when ammonia is the substrate. The allosteric effector GTP functions by stabilizing the protein conformation that binds the tetrahedral intermediate(s) formed during glutamine hydrolysis. Inhibited by the product CTP, via allosteric rather than competitive inhibition. In terms of biological role, catalyzes the ATP-dependent amination of UTP to CTP with either L-glutamine or ammonia as the source of nitrogen. Regulates intracellular CTP levels through interactions with the four ribonucleotide triphosphates. In Leptothrix cholodnii (strain ATCC 51168 / LMG 8142 / SP-6) (Leptothrix discophora (strain SP-6)), this protein is CTP synthase.